The following is a 275-amino-acid chain: MTLQQQIIKALGAKPQINAEEEIRRSIDFLKSYLKTYPFLKSLVLGISGGQDSTLAGKLCQMAINELRAETGNETLQFIAVRLPYGIQADEQDCQDAIAFIQPDRVLTVNIKGAVLASEQALREAGIELSDFVRGNEKARERMKAQYSIAGMTSGVVVGTDHAAEAITGFFTKYGDGGTDINPLYRLNKRQGKQLLAALGCPEHLYKKAPTADLEDDRPSLPDEAALGVSYDNIDDYLEGKTVPEQVAKTIENWYLKTEHKRRPPITVFDDFWKK.

46–53 (GISGGQDS) contacts ATP. A Mg(2+)-binding site is contributed by aspartate 52. Deamido-NAD(+) is bound at residue arginine 140. Threonine 160 is a binding site for ATP. A Mg(2+)-binding site is contributed by glutamate 165. Residues lysine 173 and aspartate 180 each coordinate deamido-NAD(+). ATP contacts are provided by lysine 189 and threonine 211. 260 to 261 (HK) is a deamido-NAD(+) binding site.

Belongs to the NAD synthetase family. In terms of assembly, homodimer.

The enzyme catalyses deamido-NAD(+) + NH4(+) + ATP = AMP + diphosphate + NAD(+) + H(+). It functions in the pathway cofactor biosynthesis; NAD(+) biosynthesis; NAD(+) from deamido-NAD(+) (ammonia route): step 1/1. Catalyzes the ATP-dependent amidation of deamido-NAD to form NAD. Uses ammonia as a nitrogen source. The sequence is that of NH(3)-dependent NAD(+) synthetase from Escherichia fergusonii (strain ATCC 35469 / DSM 13698 / CCUG 18766 / IAM 14443 / JCM 21226 / LMG 7866 / NBRC 102419 / NCTC 12128 / CDC 0568-73).